The following is a 246-amino-acid chain: Processing and transport protein (246 aa).

The protein belongs to the herpesviridae PRTP family.

This protein may affect translocation of the virus glycoproteins to membranes. It is involved in capsid maturation. This is Processing and transport protein (UL28) from Homo sapiens (Human).